Consider the following 607-residue polypeptide: Kelch repeat and BTB domain-containing protein 3 (607 aa).

The BTB domain maps to Y48–D115. Positions C150–Y250 constitute a BACK domain. Kelch repeat units follow at residues K291–G337, K339–T390, R400–N450, I452–P502, and K548–F595.

The chain is Kelch repeat and BTB domain-containing protein 3 from Mus musculus (Mouse).